A 417-amino-acid chain; its full sequence is Tyrosine--tRNA ligase (417 aa).

Tyr-39 lines the L-tyrosine pocket. The short motif at 44-53 (PTASSLHAGS) is the 'HIGH' region element. Positions 176 and 180 each coordinate L-tyrosine. The 'KMSKS' region signature appears at 236–240 (KMGKS). Lys-239 provides a ligand contact to ATP. The S4 RNA-binding domain occupies 350–417 (TGLLILLVQA…KKKHVLIKPL (68 aa)).

The protein belongs to the class-I aminoacyl-tRNA synthetase family. TyrS type 1 subfamily. Homodimer.

The protein localises to the cytoplasm. The enzyme catalyses tRNA(Tyr) + L-tyrosine + ATP = L-tyrosyl-tRNA(Tyr) + AMP + diphosphate + H(+). Functionally, catalyzes the attachment of tyrosine to tRNA(Tyr) in a two-step reaction: tyrosine is first activated by ATP to form Tyr-AMP and then transferred to the acceptor end of tRNA(Tyr). This Bartonella henselae (strain ATCC 49882 / DSM 28221 / CCUG 30454 / Houston 1) (Rochalimaea henselae) protein is Tyrosine--tRNA ligase.